The chain runs to 296 residues: Aspartate carbamoyltransferase catalytic subunit (296 aa).

Carbamoyl phosphate is bound by residues R50 and T51. K79 is an L-aspartate binding site. Carbamoyl phosphate contacts are provided by R100, H128, and Q131. The L-aspartate site is built by R161 and R219. Carbamoyl phosphate is bound by residues L258 and P259.

The protein belongs to the aspartate/ornithine carbamoyltransferase superfamily. ATCase family. Heterooligomer of catalytic and regulatory chains.

It carries out the reaction carbamoyl phosphate + L-aspartate = N-carbamoyl-L-aspartate + phosphate + H(+). It participates in pyrimidine metabolism; UMP biosynthesis via de novo pathway; (S)-dihydroorotate from bicarbonate: step 2/3. Functionally, catalyzes the condensation of carbamoyl phosphate and aspartate to form carbamoyl aspartate and inorganic phosphate, the committed step in the de novo pyrimidine nucleotide biosynthesis pathway. The sequence is that of Aspartate carbamoyltransferase catalytic subunit from Korarchaeum cryptofilum (strain OPF8).